We begin with the raw amino-acid sequence, 93 residues long: Small ribosomal subunit protein uS19 (93 aa).

It belongs to the universal ribosomal protein uS19 family.

Protein S19 forms a complex with S13 that binds strongly to the 16S ribosomal RNA. The chain is Small ribosomal subunit protein uS19 from Campylobacter hominis (strain ATCC BAA-381 / DSM 21671 / CCUG 45161 / LMG 19568 / NCTC 13146 / CH001A).